A 302-amino-acid polypeptide reads, in one-letter code: Phospho-N-acetylmuramoyl-pentapeptide-transferase (302 aa).

The next 9 membrane-spanning stretches (helical) occupy residues 1–21 (MIAA…KLFR), 42–62 (GTPT…GMIS), 68–88 (VLLG…LSVV), 123–143 (FFGF…LVIV), 154–174 (GLDG…WFFL), 178–198 (GVSE…LVFN), 204–224 (IFMG…VSVL), 229–249 (FYLV…ILQV), and 279–299 (IVAV…EIFG).

It belongs to the glycosyltransferase 4 family. MraY subfamily. The cofactor is Mg(2+).

Its subcellular location is the cell inner membrane. The catalysed reaction is UDP-N-acetyl-alpha-D-muramoyl-L-alanyl-gamma-D-glutamyl-meso-2,6-diaminopimeloyl-D-alanyl-D-alanine + di-trans,octa-cis-undecaprenyl phosphate = di-trans,octa-cis-undecaprenyl diphospho-N-acetyl-alpha-D-muramoyl-L-alanyl-D-glutamyl-meso-2,6-diaminopimeloyl-D-alanyl-D-alanine + UMP. It functions in the pathway cell wall biogenesis; peptidoglycan biosynthesis. Functionally, catalyzes the initial step of the lipid cycle reactions in the biosynthesis of the cell wall peptidoglycan: transfers peptidoglycan precursor phospho-MurNAc-pentapeptide from UDP-MurNAc-pentapeptide onto the lipid carrier undecaprenyl phosphate, yielding undecaprenyl-pyrophosphoryl-MurNAc-pentapeptide, known as lipid I. This chain is Phospho-N-acetylmuramoyl-pentapeptide-transferase, found in Thermotoga petrophila (strain ATCC BAA-488 / DSM 13995 / JCM 10881 / RKU-1).